The chain runs to 37 residues: Omega-sparatoxin-Hv1a (37 aa).

3 disulfide bridges follow: cysteine 4/cysteine 18, cysteine 11/cysteine 23, and cysteine 17/cysteine 33.

Expressed by the venom gland.

The protein localises to the secreted. Its function is as follows. Blocks calcium channels (Cav). This is Omega-sparatoxin-Hv1a from Heteropoda venatoria (Brown huntsman spider).